The chain runs to 202 residues: Small ribosomal subunit protein uS4c (202 aa).

The region spanning 90–153 (MRLDNVIFRL…KSEAIISKNI (64 aa)) is the S4 RNA-binding domain.

The protein belongs to the universal ribosomal protein uS4 family. In terms of assembly, part of the 30S ribosomal subunit. Contacts protein S5. The interaction surface between S4 and S5 is involved in control of translational fidelity.

The protein resides in the plastid. It localises to the chloroplast. Functionally, one of the primary rRNA binding proteins, it binds directly to 16S rRNA where it nucleates assembly of the body of the 30S subunit. In terms of biological role, with S5 and S12 plays an important role in translational accuracy. The protein is Small ribosomal subunit protein uS4c (rps4) of Hypopterygium didictyon.